A 616-amino-acid chain; its full sequence is Dihydroxy-acid dehydratase (616 aa).

Asp81 lines the Mg(2+) pocket. Cys122 contributes to the [2Fe-2S] cluster binding site. Positions 123 and 124 each coordinate Mg(2+). The residue at position 124 (Lys124) is an N6-carboxylysine. Cys195 is a [2Fe-2S] cluster binding site. Residue Glu491 participates in Mg(2+) binding. Ser517 acts as the Proton acceptor in catalysis.

This sequence belongs to the IlvD/Edd family. Homodimer. Requires [2Fe-2S] cluster as cofactor. Mg(2+) is required as a cofactor.

It catalyses the reaction (2R)-2,3-dihydroxy-3-methylbutanoate = 3-methyl-2-oxobutanoate + H2O. The enzyme catalyses (2R,3R)-2,3-dihydroxy-3-methylpentanoate = (S)-3-methyl-2-oxopentanoate + H2O. The protein operates within amino-acid biosynthesis; L-isoleucine biosynthesis; L-isoleucine from 2-oxobutanoate: step 3/4. It participates in amino-acid biosynthesis; L-valine biosynthesis; L-valine from pyruvate: step 3/4. Functions in the biosynthesis of branched-chain amino acids. Catalyzes the dehydration of (2R,3R)-2,3-dihydroxy-3-methylpentanoate (2,3-dihydroxy-3-methylvalerate) into 2-oxo-3-methylpentanoate (2-oxo-3-methylvalerate) and of (2R)-2,3-dihydroxy-3-methylbutanoate (2,3-dihydroxyisovalerate) into 2-oxo-3-methylbutanoate (2-oxoisovalerate), the penultimate precursor to L-isoleucine and L-valine, respectively. In Sodalis glossinidius (strain morsitans), this protein is Dihydroxy-acid dehydratase.